The following is a 311-amino-acid chain: Olfactory receptor 14I1 (311 aa).

Topologically, residues 1 to 26 are extracellular; it reads MDNLTKVTEFLLMEFSGIWELQVLHA. N-linked (GlcNAc...) asparagine glycosylation occurs at asparagine 3. The chain crosses the membrane as a helical span at residues 27 to 47; it reads GLFLLIYLAVLVGNLLIIAVI. Over 48–55 the chain is Cytoplasmic; the sequence is TLDQHLHT. A helical transmembrane segment spans residues 56–76; the sequence is PMYFFLKNLSVLDLCYISVTV. Over 77-92 the chain is Extracellular; sequence PKSIRNSLTRRSSISY. A helical transmembrane segment spans residues 93–113; it reads LGCVAQVYFFSAFASAELAFL. Cysteines 95 and 188 form a disulfide. The Cytoplasmic portion of the chain corresponds to 114-141; sequence TVMSYDRYVAICHPLQYRAVMTSGGCYQ. Residues 142–162 traverse the membrane as a helical segment; sequence MAVTTWLSCFSYAAVHTGNMF. At 163–189 the chain is on the extracellular side; the sequence is REHVCRSSVIHQFFRDIPHVLALVSCE. The helical transmembrane segment at 190-210 threads the bilayer; it reads VFFVEFLTLALSSCLVLGCFI. Topologically, residues 211–241 are cytoplasmic; sequence LMMISYFQIFSTVLRIPSGQSRAKAFSTCSP. The chain crosses the membrane as a helical span at residues 242 to 262; the sequence is QLIVIMLFLTTGLFAALGPIA. At 263 to 269 the chain is on the extracellular side; sequence KALSIQD. Residues 270–290 form a helical membrane-spanning segment; it reads LVIALTYTVLPPFLNPIIYSL. Topologically, residues 291–311 are cytoplasmic; sequence RNKEIKTAMWRLFVKIYFLQK.

This sequence belongs to the G-protein coupled receptor 1 family.

The protein localises to the cell membrane. Its function is as follows. Odorant receptor. This is Olfactory receptor 14I1 (OR14I1) from Homo sapiens (Human).